The primary structure comprises 333 residues: L-lactate dehydrogenase A chain (333 aa).

NAD(+)-binding positions include 30 to 58 and R100; that span reads GMVG…MEDK. Substrate is bound by residues R107, N139, and R170. Residue N139 participates in NAD(+) binding. H194 serves as the catalytic Proton acceptor. Position 249 (T249) interacts with substrate.

The protein belongs to the LDH/MDH superfamily. LDH family. Homotetramer.

It is found in the cytoplasm. The enzyme catalyses (S)-lactate + NAD(+) = pyruvate + NADH + H(+). It participates in fermentation; pyruvate fermentation to lactate; (S)-lactate from pyruvate: step 1/1. Functionally, interconverts simultaneously and stereospecifically pyruvate and lactate with concomitant interconversion of NADH and NAD(+). The sequence is that of L-lactate dehydrogenase A chain (ldha) from Danio rerio (Zebrafish).